The following is a 450-amino-acid chain: Guanine deaminase (450 aa).

Zn(2+) is bound by residues His88 and His90. Residues 90-93 (HAPQ), 218-219 (RF), 245-248 (HLSE), and Asp335 each bind substrate. 2 residues coordinate Zn(2+): His245 and Asp335.

It belongs to the metallo-dependent hydrolases superfamily. ATZ/TRZ family. Zn(2+) serves as cofactor.

It carries out the reaction guanine + H2O + H(+) = xanthine + NH4(+). It participates in purine metabolism; guanine degradation; xanthine from guanine: step 1/1. In terms of biological role, catalyzes the hydrolytic deamination of guanine, producing xanthine and ammonia. This Dictyostelium discoideum (Social amoeba) protein is Guanine deaminase (guaD).